The chain runs to 237 residues: tRNA(His) guanylyltransferase (237 aa).

The Mg(2+) site is built by aspartate 29, glycine 30, and aspartate 77. GTP is bound by residues 29-34 and 76-77; these read DGKKFH and SD.

This sequence belongs to the tRNA(His) guanylyltransferase family. The cofactor is Mg(2+).

The enzyme catalyses a 5'-end ribonucleotide-tRNA(His) + GTP + ATP + H2O = a 5'-end phospho-guanosine-ribonucleotide-tRNA(His) + AMP + 2 diphosphate + H(+). Its function is as follows. Adds a GMP to the 5'-end of tRNA(His) after transcription and RNase P cleavage. In Candida glabrata (strain ATCC 2001 / BCRC 20586 / JCM 3761 / NBRC 0622 / NRRL Y-65 / CBS 138) (Yeast), this protein is tRNA(His) guanylyltransferase (THG1).